Consider the following 987-residue polypeptide: MRRPNLDRLRLKSRQGFETSVSKPSTPSYSTYSLSPTFSDKSVLSPSTMSDSYALSSTYTAGSSYQNGESDYFGSLPTPSSDKSSTSPFPYLKGSFDDRFSSTHSLTRQPSPRSPLTPLKGNTRASPEIRYVSDFTPPSSPFEDMQASVHSLPLSGCSIGPVRTNHSSSLSNSSNSLLQTESSLRPNSSFVNSPFFPLPSSDDLFLNDRVINLFLFYEKFSYLFTHLLSAIKSRDALSIPSLVLSLQEELFNLCQQTGTFYLLQHNLLQNFEFENPIKLHFDKIIPYFSRLTVLTFSNRAFIFPDHTFPRLQQSAEDFLYHLQFFFTLCANNSLYLSRFCYYPSFVPNTPFGGKWTNNGLSAVSSAYRTRLLEPCLPELDKCVWFLLKNCDEFIENFSDFADEEYVFEICSTITSHSEQIFNKLESWDMSIYFDKDLSECEQATNFAVQSYFVTKQRCYDLLTDLVCSSQDLMMEHSNDFSTMPTMIASIAVAFQTLFENVCDFLKVRAALVDEMQELATKEFENKFSNANTAKDDEPARQTNKGTTRISRSSDFTAVSEMSKDTLTLGRNSLQSILMLDNLLTNKVVQSDNNVKGGTLPALVHYLVQNVHLNKDFRHSFLLTYKTFTTPQELFTLLVILFHELPPPGLDATAYSSWEKGDNFVTKKNVCTVMNLWVQKYFFEDLKARNTLYLISEMRTFLRDHVVPSFHIGSVILSEIDNLWTEEPPDSLTQRLLSSPMATFISLNVYAYTPEEFASQMTLLEFDYLKQIPSREWIFRSWVSRDSRSAVRNYINFSNCFTYWIINCILEKKNTKARTAVISFFIQTAYKCLSLQNFSTLMSIVSALNSAPIYRLHAAYKLVKAEDIICLSGLREIVETKKNFSTYRALLRKAELPCVPFLGVILSDLTFIDEGNPDVLDSSPHLLSFNKRHRLADVVADVCRFQSSSYEMQSNTDLQSYILHRCRFVNQDLSYLFDKSLSLEPRSS.

The segment covering 1–10 (MRRPNLDRLR) has biased composition (basic and acidic residues). Disordered stretches follow at residues 1 to 50 (MRRP…STMS), 100 to 130 (FSST…PEIR), and 529 to 552 (NANT…ISRS). Over residues 19–39 (TSVSKPSTPSYSTYSLSPTFS) the composition is skewed to low complexity. Composition is skewed to polar residues over residues 40–50 (DKSVLSPSTMS), 102–111 (STHSLTRQPS), and 540–552 (RQTN…ISRS). At Ser-552 the chain carries Phosphoserine. One can recognise an N-terminal Ras-GEF domain in the interval 590–723 (SDNNVKGGTL…VILSEIDNLW (134 aa)). A Ras-GEF domain is found at 752–985 (TPEEFASQMT…FDKSLSLEPR (234 aa)).

The protein resides in the cytoplasm. In terms of biological role, has a role in chromosome segregation and cell morphology upstream of the ras1-scd1 pathway. Promotes the exchange of ras1-bound GDP by GTP leading to its activation. The chain is Ras guanine nucleotide exchange factor efc25 (efc25) from Schizosaccharomyces pombe (strain 972 / ATCC 24843) (Fission yeast).